Reading from the N-terminus, the 179-residue chain is Small ribosomal subunit protein uS7 (179 aa).

The protein belongs to the universal ribosomal protein uS7 family. In terms of assembly, part of the 30S ribosomal subunit. Contacts proteins S9 and S11.

In terms of biological role, one of the primary rRNA binding proteins, it binds directly to 16S rRNA where it nucleates assembly of the head domain of the 30S subunit. Is located at the subunit interface close to the decoding center, probably blocks exit of the E-site tRNA. In Shigella flexneri serotype 5b (strain 8401), this protein is Small ribosomal subunit protein uS7.